A 513-amino-acid polypeptide reads, in one-letter code: MSPVDAARPQLKIRQIHLDTGRENVAVISRHSKALRPEVFSGFSRVEIRRGNQSMLATLLITDDNAMVGPDDLGLAEPAFRRFGEAAGSLVSVTPASPPASLDAVRGKIQGRTLTAPEIEAIVNDLARYRYSDMEIAAFLIGAARFMTSDELLALVSAMASVGTQLRWDRPVVVDKHCIGGIPGNRTSMVLVPIVAAHGLTIPKTSSRAITSPAGTADTMEVLARVDVGVPEMKEIVAACNGCLIWGGHVNLSPADDILISVERPLCLDTREQMVASIMSKKLAAGSTHLLVDLPLGPSAKVISPIDAMRLRKLFEFVGDHFGIAVETITTDGRQPIGNGIGPVLEAQDVMAVLGNDPKAPADLREKSLRLAGHLLEYDPNLRGGSGYARARELLESGAALKQMQKIIDNQGPTNCRKDLGTLTTDIVAPRDGVVTGIDNLQLNRLARTAGAPIDKGAGIKLFKKVGDRVEQGEPLYRIYAFDPSEQELAVSAAEESSGYTVDGVHAFREQVL.

This sequence belongs to the thymidine/pyrimidine-nucleoside phosphorylase family. Type 2 subfamily.

It carries out the reaction thymidine + phosphate = 2-deoxy-alpha-D-ribose 1-phosphate + thymine. This chain is Putative thymidine phosphorylase, found in Rhodopseudomonas palustris (strain BisA53).